The primary structure comprises 801 residues: Endonuclease MutS2 (801 aa).

ATP is bound at residue 336-343; sequence GPNTGGKT. Residues 696–721 form a disordered region; the sequence is AQQSKAKQKQQKIVKTKTASGSARAT. Residues 701 to 710 show a composition bias toward basic residues; it reads AKQKQQKIVK. The Smr domain maps to 726–801; it reads LDLRGVRYEA…GDGATIAELS (76 aa).

The protein belongs to the DNA mismatch repair MutS family. MutS2 subfamily. Homodimer. Binds to stalled ribosomes, contacting rRNA.

Endonuclease that is involved in the suppression of homologous recombination and thus may have a key role in the control of bacterial genetic diversity. Functionally, acts as a ribosome collision sensor, splitting the ribosome into its 2 subunits. Detects stalled/collided 70S ribosomes which it binds and splits by an ATP-hydrolysis driven conformational change. Acts upstream of the ribosome quality control system (RQC), a ribosome-associated complex that mediates the extraction of incompletely synthesized nascent chains from stalled ribosomes and their subsequent degradation. Probably generates substrates for RQC. This is Endonuclease MutS2 from Leuconostoc citreum (strain KM20).